Reading from the N-terminus, the 123-residue chain is Large ribosomal subunit protein eL8 (123 aa).

Belongs to the eukaryotic ribosomal protein eL8 family. In terms of assembly, part of the 50S ribosomal subunit. Probably part of the RNase P complex.

It localises to the cytoplasm. Multifunctional RNA-binding protein that recognizes the K-turn motif in ribosomal RNA, the RNA component of RNase P, box H/ACA, box C/D and box C'/D' sRNAs. The chain is Large ribosomal subunit protein eL8 from Methanobrevibacter smithii (strain ATCC 35061 / DSM 861 / OCM 144 / PS).